A 472-amino-acid polypeptide reads, in one-letter code: 3-isopropylmalate dehydratase large subunit (472 aa).

Cys-353, Cys-414, and Cys-417 together coordinate [4Fe-4S] cluster.

This sequence belongs to the aconitase/IPM isomerase family. LeuC type 1 subfamily. Heterodimer of LeuC and LeuD. [4Fe-4S] cluster serves as cofactor.

The catalysed reaction is (2R,3S)-3-isopropylmalate = (2S)-2-isopropylmalate. It participates in amino-acid biosynthesis; L-leucine biosynthesis; L-leucine from 3-methyl-2-oxobutanoate: step 2/4. Functionally, catalyzes the isomerization between 2-isopropylmalate and 3-isopropylmalate, via the formation of 2-isopropylmaleate. The chain is 3-isopropylmalate dehydratase large subunit from Acinetobacter baumannii (strain AB307-0294).